Consider the following 470-residue polypeptide: TNF receptor-associated factor 4 (470 aa).

Residues 18 to 58 (CPLCGKPMREPVQVSTCGHRFCDTCLQEFLSEGVFKCPEDQ) form an RING-type zinc finger. 3 TRAF-type zinc fingers span residues 102–154 (HLNT…EAYE), 155–208 (SHEG…DTIQ), and 209–266 (SHQY…KLAM). K263 is covalently cross-linked (Glycyl lysine isopeptide (Lys-Gly) (interchain with G-Cter in ubiquitin)). Residues 277 to 309 (HLAMMCALVSRQRQELQELRRELEELSVGSDGV) are a coiled coil. Positions 307 to 462 (DGVLIWKIGS…DDAVFIRAAV (156 aa)) constitute an MATH domain. S426 bears the Phosphoserine mark.

It belongs to the TNF receptor-associated factor family. B subfamily. Homotrimer. Interacts with LTBR/TNFRSF3, NGFR/TNFRSF16, RPS6KB1 and TGFB1I1. Interacts with SMURF1. Interacts (via TRAF domain) with MAP3K4 (via kinase domain). Interacts with NCF1, TICAM1, IRAK1 and TRAF6, and is probably part of a complex containing TRAF4, NCF1, TICAM1, IRAK1 and TRAF6. Interacts (via MATH domain) with GP6 and GP1BB. Interacts with EGFR (via C-terminal region); this interaction promotes the formation of EGFR asymmetric dimers. Interacts with PKM; this interaction promotes PKM kinase activity. In terms of processing, polyubiquitinated, leading to its proteasomal degradation. Ubiquitinated at Lys-263 by the SCF(FBXL2) complex, leading to its degradation by the proteasome. In terms of tissue distribution, expressed in epithelial cells of thymus, dendritic cells of lymph node, and in the basal cell layer of epithelia such as epidermis, nasopharynx, respiratory tract, salivary gland, and esophagus.

Its subcellular location is the cytoplasm. The protein localises to the nucleus. It is found in the perinuclear region. The protein resides in the cell junction. It localises to the tight junction. Its subcellular location is the cell membrane. The protein localises to the cytoskeleton. The catalysed reaction is S-ubiquitinyl-[E2 ubiquitin-conjugating enzyme]-L-cysteine + [acceptor protein]-L-lysine = [E2 ubiquitin-conjugating enzyme]-L-cysteine + N(6)-ubiquitinyl-[acceptor protein]-L-lysine.. The protein operates within protein degradation; proteasomal ubiquitin-dependent pathway. In terms of biological role, adapter protein with E3 ligase activity that is involved in many diverse biological processes including cell proliferation, migration, differentiation, DNA repair, platelet activation or apoptosis. Promotes EGFR-mediated signaling by facilitating the dimerization of EGFR and downstream AKT activation thereby promoting cell proliferation. Ubiquitinates SMURF2 through 'Lys-48'-linked ubiquitin chain leading to SMURF2 degradation through the proteasome and subsequently osteogenic differentiation. Promotes 'Lys-63'-mediated ubiquitination of CHK1 which in turn activates cell cycle arrest and activation of DNA repair. In addition, promotes an atypical 'Lys-29'-linked ubiquitination at the C-terminal end of IRS1 which is crucial for insulin-like growth factor (IGF) signal transduction. Regulates activation of NF-kappa-B in response to signaling through Toll-like receptors. Required for normal skeleton development, and for normal development of the respiratory tract. Required for activation of RPS6KB1 in response to TNF signaling. Modulates TRAF6 functions. Inhibits adipogenic differentiation by activating pyruvate kinase PKM activity and subsequently the beta-catenin signaling pathway. This Homo sapiens (Human) protein is TNF receptor-associated factor 4 (TRAF4).